The following is a 494-amino-acid chain: 4-trimethylaminobutyraldehyde dehydrogenase (494 aa).

At Ser-2 the chain carries N-acetylserine. Position 30 is an N6-acetyllysine; alternate (Lys-30). Residue Lys-30 is modified to N6-succinyllysine; alternate. Lys-59 is subject to N6-succinyllysine. NAD(+) is bound by residues Lys-180 and 232-236; that span reads GSVPT. The Proton acceptor role is filled by Glu-254. Cys-288 functions as the Nucleophile in the catalytic mechanism. Lys-298 carries the post-translational modification N6-acetyllysine. At Lys-303 the chain carries N6-acetyllysine; alternate. Lys-303 is modified (N6-succinyllysine; alternate). The residue at position 344 (Lys-344) is an N6-acetyllysine. Residue Glu-391 participates in NAD(+) binding.

Belongs to the aldehyde dehydrogenase family. Homotetramer.

It is found in the cytoplasm. The protein localises to the cytosol. It catalyses the reaction 4-(trimethylamino)butanal + NAD(+) + H2O = 4-(trimethylamino)butanoate + NADH + 2 H(+). The enzyme catalyses an aldehyde + NAD(+) + H2O = a carboxylate + NADH + 2 H(+). The catalysed reaction is 4-aminobutanal + NAD(+) + H2O = 4-aminobutanoate + NADH + 2 H(+). It carries out the reaction formaldehyde + NAD(+) + H2O = formate + NADH + 2 H(+). It catalyses the reaction acetaldehyde + NAD(+) + H2O = acetate + NADH + 2 H(+). The enzyme catalyses imidazole-4-acetaldehyde + NAD(+) + H2O = imidazole-4-acetate + NADH + 2 H(+). The catalysed reaction is acrolein + NAD(+) + H2O = acrylate + NADH + 2 H(+). It carries out the reaction (5-hydroxyindol-3-yl)acetaldehyde + NAD(+) + H2O = (5-hydroxyindol-3-yl)acetate + NADH + 2 H(+). It catalyses the reaction 3,4-dihydroxyphenylacetaldehyde + NAD(+) + H2O = 3,4-dihydroxyphenylacetate + NADH + 2 H(+). The enzyme catalyses spermine monoaldehyde + NAD(+) + H2O = N-(2-carboxyethyl)spermidine + NADH + 2 H(+). The catalysed reaction is propanal + NAD(+) + H2O = propanoate + NADH + 2 H(+). It carries out the reaction butanal + NAD(+) + H2O = butanoate + NADH + 2 H(+). It catalyses the reaction pentanal + NAD(+) + H2O = pentanoate + NADH + 2 H(+). The enzyme catalyses hexanal + NAD(+) + H2O = hexanoate + NADH + 2 H(+). Its pathway is amine and polyamine biosynthesis; carnitine biosynthesis. Converts gamma-trimethylaminobutyraldehyde into gamma-butyrobetaine with high efficiency (in vitro). Can catalyze the irreversible oxidation of a broad range of aldehydes to the corresponding acids in an NAD-dependent reaction, but with low efficiency. Catalyzes the oxidation of aldehydes arising from biogenic amines and polyamines. The sequence is that of 4-trimethylaminobutyraldehyde dehydrogenase (ALDH9A1) from Sus scrofa (Pig).